The sequence spans 587 residues: MFS-type transporter opaD (587 aa).

9 consecutive transmembrane segments (helical) span residues 87–107, 124–146, 153–173, 184–204, 214–234, 242–262, 284–304, 315–335, and 357–377; these read VAIM…NTIL, MGWY…GKLL, WVYI…GVSP, ISGT…TIIV, GILS…GGAF, WCFY…LLLF, IIGL…LQWG, IIAL…VEYW, and LFTF…PIWF. N-linked (GlcNAc...) asparagine glycosylation is present at N382. The next 5 helical transmembrane spans lie at 393–413, 414–434, 447–467, 483–503, and 554–574; these read IPLI…VTTL, GYYI…AGLL, IGFQ…PLVV, LVTL…QSVF, and VYLV…PIRW.

Belongs to the major facilitator superfamily. TCR/Tet family.

It localises to the membrane. Its function is as follows. MFS-type transporter; part of the gene cluster that mediates the biosynthesis of oxepinamides, derivatives of anthranilyl-containing tripeptides that share an oxepin ring and a fused pyrimidinone moiety. The chain is MFS-type transporter opaD from Aspergillus ustus.